Here is a 245-residue protein sequence, read N- to C-terminus: Ribosomal RNA small subunit methyltransferase G (245 aa).

S-adenosyl-L-methionine is bound by residues glycine 85, phenylalanine 90, 108 to 110, 136 to 137, and arginine 155; these read DST and AE.

Belongs to the methyltransferase superfamily. RNA methyltransferase RsmG family.

The protein localises to the cytoplasm. Its function is as follows. Specifically methylates the N7 position of a guanine in 16S rRNA. The sequence is that of Ribosomal RNA small subunit methyltransferase G from Trichormus variabilis (strain ATCC 29413 / PCC 7937) (Anabaena variabilis).